The sequence spans 460 residues: Nucleosome assembly protein 1-like 2 (460 aa).

2 stretches are compositionally biased toward basic and acidic residues: residues 1-11 and 27-36; these read MAESENRKELS and LGEHLERGED. Disordered regions lie at residues 1–88 and 214–238; these read MAES…ADRP and EEEE…EDPK. Acidic residues predominate over residues 214-236; that stretch reads EEEEEEEEDDIEATGEENKEEED. A Nuclear localization signal motif is present at residues 346–352; it reads IKKKQKH.

Belongs to the nucleosome assembly protein (NAP) family.

The protein resides in the nucleus. Acidic protein which may be involved in interactions with other proteins or DNA. This is Nucleosome assembly protein 1-like 2 (NAP1L2) from Homo sapiens (Human).